A 531-amino-acid chain; its full sequence is CTP synthase (531 aa).

The interval 1–267 (MTKYIIITGG…ASKILSKLNL (267 aa)) is amidoligase domain. Serine 13 serves as a coordination point for CTP. UTP is bound at residue serine 13. Residue 14–19 (SVGKGT) participates in ATP binding. Tyrosine 54 lines the L-glutamine pocket. Aspartate 71 is an ATP binding site. Mg(2+) contacts are provided by aspartate 71 and glutamate 141. Residues 148 to 150 (DIE), 188 to 193 (KTKPLQ), and lysine 224 each bind CTP. Residues 188-193 (KTKPLQ) and lysine 224 each bind UTP. The Glutamine amidotransferase type-1 domain occupies 292–531 (KIALVGKYTK…IGFLRAAAGV (240 aa)). Glycine 355 is a binding site for L-glutamine. Cysteine 382 (nucleophile; for glutamine hydrolysis) is an active-site residue. L-glutamine contacts are provided by residues 383 to 386 (YGMQ), glutamate 406, and arginine 463. Catalysis depends on residues histidine 507 and glutamate 509.

This sequence belongs to the CTP synthase family. In terms of assembly, homotetramer.

The catalysed reaction is UTP + L-glutamine + ATP + H2O = CTP + L-glutamate + ADP + phosphate + 2 H(+). The enzyme catalyses L-glutamine + H2O = L-glutamate + NH4(+). It carries out the reaction UTP + NH4(+) + ATP = CTP + ADP + phosphate + 2 H(+). Its pathway is pyrimidine metabolism; CTP biosynthesis via de novo pathway; CTP from UDP: step 2/2. Its activity is regulated as follows. Allosterically activated by GTP, when glutamine is the substrate; GTP has no effect on the reaction when ammonia is the substrate. The allosteric effector GTP functions by stabilizing the protein conformation that binds the tetrahedral intermediate(s) formed during glutamine hydrolysis. Inhibited by the product CTP, via allosteric rather than competitive inhibition. Its function is as follows. Catalyzes the ATP-dependent amination of UTP to CTP with either L-glutamine or ammonia as the source of nitrogen. Regulates intracellular CTP levels through interactions with the four ribonucleotide triphosphates. This Sulfurisphaera tokodaii (strain DSM 16993 / JCM 10545 / NBRC 100140 / 7) (Sulfolobus tokodaii) protein is CTP synthase.